The primary structure comprises 127 residues: Fluoride-specific ion channel FluC (127 aa).

The next 4 helical transmembrane spans lie at 8–28 (LLIAFGGAIGSIFRYLLQYWF), 37–57 (PWGTLTANLLGSFLIGVVYAI), 68–88 (WKFLLASGFCGGFTTFSTFSY), and 100–120 (ILFLGYICLSVVGGIGFAFAG). Na(+) is bound by residues Gly78 and Thr81.

It belongs to the fluoride channel Fluc/FEX (TC 1.A.43) family.

The protein resides in the cell inner membrane. The enzyme catalyses fluoride(in) = fluoride(out). Na(+) is not transported, but it plays an essential structural role and its presence is essential for fluoride channel function. Functionally, fluoride-specific ion channel. Important for reducing fluoride concentration in the cell, thus reducing its toxicity. This is Fluoride-specific ion channel FluC from Leptospira interrogans serogroup Icterohaemorrhagiae serovar copenhageni (strain Fiocruz L1-130).